The primary structure comprises 189 residues: GTPase NRas (189 aa).

Residue 10 to 17 (GAGGVGKS) participates in GTP binding. The Effector region motif lies at 32–40 (YDPTIEDSY). Residues 57–61 (DTAGQ) and 116–119 (NKCD) each bind GTP. The tract at residues 166–185 (YRMKKLNSNEDGNQGCMGLS) is hypervariable region. Cys-181 carries the S-palmitoyl cysteine lipid modification. A lipid anchor (S-farnesyl cysteine) is attached at Cys-186. Residues 187–189 (IVM) constitute a propeptide, removed in mature form.

This sequence belongs to the small GTPase superfamily. Ras family. Post-translationally, palmitoylated by the ZDHHC9-GOLGA7 complex. Depalmitoylated by ABHD17A, ABHD17B and ABHD17C. A continuous cycle of de- and re-palmitoylation regulates rapid exchange between plasma membrane and Golgi.

It is found in the cell membrane. It localises to the golgi apparatus membrane. It carries out the reaction GTP + H2O = GDP + phosphate + H(+). Its activity is regulated as follows. Alternates between an inactive form bound to GDP and an active form bound to GTP. Activated by a guanine nucleotide-exchange factor (GEF) and inactivated by a GTPase-activating protein (GAP). Ras proteins bind GDP/GTP and possess intrinsic GTPase activity. In Gallus gallus (Chicken), this protein is GTPase NRas (NRAS).